The sequence spans 102 residues: Small ribosomal subunit protein uS10 (102 aa).

Residues T30–T58 are disordered.

The protein belongs to the universal ribosomal protein uS10 family. Part of the 30S ribosomal subunit.

In terms of biological role, involved in the binding of tRNA to the ribosomes. This is Small ribosomal subunit protein uS10 from Haloquadratum walsbyi (strain DSM 16790 / HBSQ001).